Reading from the N-terminus, the 332-residue chain is MLLETQDALYVALELVIAALSVAGNVLVCAAVGTANTLQTPTNYFLVSLAAADVAVGLFAIPFAITISLGFCTDFYGCLFLACFVLVLTQSSIFSLLAVAVDRYLAICVPLRYKSLVTGTRARGVIAVLWVLAFGIGLTPFLGWNSKDSATNNCTEPWDGTTNESCCLVKCLFENVVPMSYMVYFNFFGCVLPPLLIMLVIYIKIFLVACRQLQRTELMDHSRTTLQREIHAAKSLAMIVGIFALCWLPVHAVNCVTLFQPAQGKNKPKWAMNMAILLSHANSVVNPIVYAYRNRDFRYTFHKIISRYLLCQADVKSGNGQAGVQPALGVGL.

Over 1 to 8 (MLLETQDA) the chain is Extracellular. A helical transmembrane segment spans residues 9–33 (LYVALELVIAALSVAGNVLVCAAVG). At 34–43 (TANTLQTPTN) the chain is on the cytoplasmic side. A helical transmembrane segment spans residues 44 to 67 (YFLVSLAAADVAVGLFAIPFAITI). At 68–78 (SLGFCTDFYGC) the chain is on the extracellular side. A disulfide bond links Cys-78 and Cys-171. Residues 79-101 (LFLACFVLVLTQSSIFSLLAVAV) form a helical membrane-spanning segment. At 102-121 (DRYLAICVPLRYKSLVTGTR) the chain is on the cytoplasmic side. Residues 122–144 (ARGVIAVLWVLAFGIGLTPFLGW) traverse the membrane as a helical segment. Topologically, residues 145–178 (NSKDSATNNCTEPWDGTTNESCCLVKCLFENVVP) are extracellular. 2 N-linked (GlcNAc...) asparagine glycosylation sites follow: Asn-153 and Asn-163. Position 174 (Glu-174) interacts with adenosine. A helical membrane pass occupies residues 179–203 (MSYMVYFNFFGCVLPPLLIMLVIYI). The Cytoplasmic segment spans residues 204-235 (KIFLVACRQLQRTELMDHSRTTLQREIHAAKS). Residues 236 to 259 (LAMIVGIFALCWLPVHAVNCVTLF) form a helical membrane-spanning segment. Residue Asn-254 participates in adenosine binding. Residues 260–267 (QPAQGKNK) lie on the Extracellular side of the membrane. A helical membrane pass occupies residues 268–291 (PKWAMNMAILLSHANSVVNPIVYA). 2 residues coordinate adenosine: Ser-279 and His-280. Residues 292–332 (YRNRDFRYTFHKIISRYLLCQADVKSGNGQAGVQPALGVGL) lie on the Cytoplasmic side of the membrane. The S-palmitoyl cysteine moiety is linked to residue Cys-311.

The protein belongs to the G-protein coupled receptor 1 family.

The protein localises to the cell membrane. Receptor for adenosine. The activity of this receptor is mediated by G proteins which activate adenylyl cyclase. The chain is Adenosine receptor A2b (ADORA2B) from Homo sapiens (Human).